Consider the following 201-residue polypeptide: Oligoribonuclease (201 aa).

Residues 20–183 (LVWLDMEMTG…ADIHESIDEL (164 aa)) enclose the Exonuclease domain. Tyrosine 141 is an active-site residue.

This sequence belongs to the oligoribonuclease family.

It localises to the cytoplasm. 3'-to-5' exoribonuclease specific for small oligoribonucleotides. This is Oligoribonuclease from Burkholderia mallei (strain NCTC 10229).